Consider the following 345-residue polypeptide: Flap endonuclease 1 (345 aa).

The N-domain stretch occupies residues 1-103 (MGIKQLSKLL…KELEKRKERR (103 aa)). Asp34 is a Mg(2+) binding site. DNA contacts are provided by Arg47 and Arg69. Mg(2+)-binding residues include Asp85, Glu157, Glu159, Asp178, and Asp180. Residues 121–252 (LMEMYDKRKT…KKALGLIKKH (132 aa)) form an I-domain region. Position 157 (Glu157) interacts with DNA. Residues Gly230 and Asp232 each contribute to the DNA site. Asp232 provides a ligand contact to Mg(2+). Residues 333 to 341 (TQGRLDCFI) are interaction with PCNA.

It belongs to the XPG/RAD2 endonuclease family. FEN1 subfamily. In terms of assembly, interacts with PCNA. Three molecules of FEN1 bind to one PCNA trimer with each molecule binding to one PCNA monomer. PCNA stimulates the nuclease activity without altering cleavage specificity. The cofactor is Mg(2+). Phosphorylated. Phosphorylation upon DNA damage induces relocalization to the nuclear plasma.

Its subcellular location is the nucleus. It localises to the nucleolus. The protein resides in the nucleoplasm. The protein localises to the mitochondrion. Its function is as follows. Structure-specific nuclease with 5'-flap endonuclease and 5'-3' exonuclease activities involved in DNA replication and repair. During DNA replication, cleaves the 5'-overhanging flap structure that is generated by displacement synthesis when DNA polymerase encounters the 5'-end of a downstream Okazaki fragment. It enters the flap from the 5'-end and then tracks to cleave the flap base, leaving a nick for ligation. Also involved in the long patch base excision repair (LP-BER) pathway, by cleaving within the apurinic/apyrimidinic (AP) site-terminated flap. Acts as a genome stabilization factor that prevents flaps from equilibrating into structures that lead to duplications and deletions. Also possesses 5'-3' exonuclease activity on nicked or gapped double-stranded DNA, and exhibits RNase H activity. Also involved in replication and repair of rDNA and in repairing mitochondrial DNA. This Encephalitozoon cuniculi (strain GB-M1) (Microsporidian parasite) protein is Flap endonuclease 1.